Reading from the N-terminus, the 323-residue chain is CD-NTase-associated protein 12 (323 aa).

Residues Arg-4 to Thr-120 form the TIR domain. Residue Glu-84 is part of the active site. The STING domain stretch occupies residues Ser-154 to Leu-323. 7 residues coordinate 3',3'-c-di-GMP: Ser-164, Phe-165, Arg-234, Pro-237, Asp-259, Ser-262, and Thr-263.

It in the C-terminal section; belongs to the bacterial STING family. As to quaternary structure, forms homodimers which subsequently form filaments. In vitro in the presence of c-di-GMP forms filaments up to 300 nm in length with an ordered array of parallel-stacked subunits, where the TIR domains form one face of the filament and the STING domains form the other face. Antiparallel double-filament structures are also seen. 3'3'-cGAMP weakly induces filament formation, while 2'3'-cGAMP does not.

It carries out the reaction NAD(+) + H2O = ADP-D-ribose + nicotinamide + H(+). With respect to regulation, NAD(+) hydrolase activity is strongly stimulated by c-di-GMP, weakly by 3'3'-cGAMP, very weakly by c-di-AMP and not at all by 2'3'-cGAMP. Self-association of TIR domains is required for NADase activity. Effector protein of a CBASS antiviral system with NAD(+) hydrolase activity. CBASS (cyclic oligonucleotide-based antiphage signaling system) provides immunity against bacteriophage. The CD-NTase protein synthesizes cyclic nucleotides in response to infection; these serve as specific second messenger signals. The signals activate a diverse range of effectors, leading to bacterial cell death and thus abortive phage infection. A type I-D(GG) CBASS system. Its function is as follows. Upon activation by 3'3'-c-di-GMP forms filaments which hydrolyze NAD(+); filament formation is required for enzyme activation. Induction in an E.coli strain that synthesizes c-di-GMP leads to significant growth inhibition. Binds c-di-GMP and 3'3'-cGAMP (3'3'-cyclic GMP-AMP), but not c-di-AMP, 2'3'-cGAMP or cUMP-AMP. This chain is CD-NTase-associated protein 12, found in Sphingobacterium faecium (strain DSM 11690 / JCM 21820 / NBRC 15299 / NCIMB 13408 / KS 0470).